The chain runs to 106 residues: ATP-dependent Clp protease adapter protein ClpS (106 aa).

This sequence belongs to the ClpS family. As to quaternary structure, binds to the N-terminal domain of the chaperone ClpA.

Its function is as follows. Involved in the modulation of the specificity of the ClpAP-mediated ATP-dependent protein degradation. This chain is ATP-dependent Clp protease adapter protein ClpS, found in Nocardia farcinica (strain IFM 10152).